The sequence spans 130 residues: MAENQYYGTGRRKSSAARVFIKPGNGKIVINQRSLEQYFGRETARMVVRQPLELVDMVEKLDLYITVKGGGISGQAGAIRHGITRALMEYDESLRSELRKAGFVTRDARQVERKKVGLRKARRRPQFSKR.

Belongs to the universal ribosomal protein uS9 family.

This is Small ribosomal subunit protein uS9 from Citrobacter koseri (strain ATCC BAA-895 / CDC 4225-83 / SGSC4696).